Consider the following 223-residue polypeptide: Probable cell wall protein PGA61 (223 aa).

A signal peptide spans 1 to 16 (MKSGLLLAVILPVAFA). Asn25 is a glycosylation site (N-linked (GlcNAc...) asparagine). The disordered stretch occupies residues 83 to 134 (GAPSSSSTPTSSTETTSSTEAETTEAETTEQPSSSTSSNTESSKTTILETPS). 2 stretches are compositionally biased toward low complexity: residues 84-103 (APSSSSTPTSSTETTSSTEA) and 111-128 (TEQPSSSTSSNTESSKTT). Residue Asn188 is glycosylated (N-linked (GlcNAc...) asparagine). Residue Asn202 is the site of GPI-anchor amidated asparagine attachment. Positions 203-223 (GAGRAAVIGSGSLLALLLNFI) are cleaved as a propeptide — removed in mature form.

This sequence belongs to the IHD1 family. The GPI-anchor is attached to the protein in the endoplasmic reticulum and serves to target the protein to the cell surface. There, the glucosamine-inositol phospholipid moiety is cleaved off and the GPI-modified mannoprotein is covalently attached via its lipidless GPI glycan remnant to the 1,6-beta-glucan of the outer cell wall layer.

Its subcellular location is the secreted. The protein resides in the cell wall. The protein localises to the membrane. Functionally, probable GPI-anchored cell wall protein that may be involved in cell wall organization, hyphal growth, as well as in virulence. The chain is Probable cell wall protein PGA61 (PGA61) from Candida albicans (strain SC5314 / ATCC MYA-2876) (Yeast).